A 908-amino-acid polypeptide reads, in one-letter code: Disease resistance protein RPP8 (908 aa).

Residues aspartate 15–arginine 57 are a coiled coil. In terms of domain architecture, NB-ARC spans arginine 146–isoleucine 459. Glycine 192–threonine 199 is an ATP binding site. LRR repeat units lie at residues leucine 575 to leucine 600, isoleucine 601 to leucine 623, methionine 648 to asparagine 673, methionine 693 to glutamate 718, leucine 722 to histidine 746, isoleucine 748 to proline 770, leucine 793 to glutamine 820, methionine 842 to threonine 867, and lysine 882 to asparagine 905.

Belongs to the disease resistance NB-LRR family. RPP8/HRT subfamily. Interacts with the NAC protein TIP. Interacts with MORC1/CRT1. Interacts with COP1 and is subsequently degraded in a 26s proteasome dependent manner. Mostly expressed in leaves, and, to a lower extent, in roots.

Its subcellular location is the cell membrane. Functionally, disease resistance protein. Resistance proteins guard the plant against pathogens that contain an appropriate avirulence protein via an indirect interaction with this avirulence protein. That triggers a defense system including the hypersensitive response, which restricts the pathogen growth. The interaction with TIP (TCV-interacting protein) may be essential for the recognition of the avirulence proteins, and the triggering of the defense response. Triggers resistance to turnip crinkle virus (TCV) via a SAG101-dependent pathway. The polypeptide is Disease resistance protein RPP8 (RPP8) (Arabidopsis thaliana (Mouse-ear cress)).